A 290-amino-acid chain; its full sequence is ATP synthase gamma chain (290 aa).

This sequence belongs to the ATPase gamma chain family. F-type ATPases have 2 components, CF(1) - the catalytic core - and CF(0) - the membrane proton channel. CF(1) has five subunits: alpha(3), beta(3), gamma(1), delta(1), epsilon(1). CF(0) has three main subunits: a, b and c.

It localises to the cell inner membrane. Produces ATP from ADP in the presence of a proton gradient across the membrane. The gamma chain is believed to be important in regulating ATPase activity and the flow of protons through the CF(0) complex. In Anaeromyxobacter sp. (strain Fw109-5), this protein is ATP synthase gamma chain.